A 122-amino-acid chain; its full sequence is Small ribosomal subunit protein uS13 (122 aa).

The interval 92–122 (HRRGLPVRGQRTHTNARTRKGPAKPIAGKKK) is disordered.

It belongs to the universal ribosomal protein uS13 family. As to quaternary structure, part of the 30S ribosomal subunit. Forms a loose heterodimer with protein S19. Forms two bridges to the 50S subunit in the 70S ribosome.

Its function is as follows. Located at the top of the head of the 30S subunit, it contacts several helices of the 16S rRNA. In the 70S ribosome it contacts the 23S rRNA (bridge B1a) and protein L5 of the 50S subunit (bridge B1b), connecting the 2 subunits; these bridges are implicated in subunit movement. Contacts the tRNAs in the A and P-sites. The chain is Small ribosomal subunit protein uS13 from Paracoccus denitrificans (strain Pd 1222).